Reading from the N-terminus, the 388-residue chain is Alanine racemase (388 aa).

Lys-39 serves as the catalytic Proton acceptor; specific for D-alanine. Lys-39 is modified (N6-(pyridoxal phosphate)lysine). Residue Lys-129 is modified to N6-carboxylysine. A substrate-binding site is contributed by Arg-136. Tyr-265 serves as the catalytic Proton acceptor; specific for L-alanine. Met-312 contacts substrate.

The protein belongs to the alanine racemase family. In terms of assembly, homodimer. The cofactor is pyridoxal 5'-phosphate.

The catalysed reaction is L-alanine = D-alanine. Its pathway is amino-acid biosynthesis; D-alanine biosynthesis; D-alanine from L-alanine: step 1/1. Its activity is regulated as follows. Inhibited by acetate and propionate. Irreversibly inhibited by cycloserine. Its function is as follows. Catalyzes the interconversion of L-alanine and D-alanine. Also weakly active on serine. This is Alanine racemase (alr) from Geobacillus stearothermophilus (Bacillus stearothermophilus).